The following is a 393-amino-acid chain: NAD(P)H-quinone oxidoreductase subunit H, chloroplastic (393 aa).

The protein belongs to the complex I 49 kDa subunit family. NDH is composed of at least 16 different subunits, 5 of which are encoded in the nucleus.

Its subcellular location is the plastid. It is found in the chloroplast thylakoid membrane. It carries out the reaction a plastoquinone + NADH + (n+1) H(+)(in) = a plastoquinol + NAD(+) + n H(+)(out). It catalyses the reaction a plastoquinone + NADPH + (n+1) H(+)(in) = a plastoquinol + NADP(+) + n H(+)(out). NDH shuttles electrons from NAD(P)H:plastoquinone, via FMN and iron-sulfur (Fe-S) centers, to quinones in the photosynthetic chain and possibly in a chloroplast respiratory chain. The immediate electron acceptor for the enzyme in this species is believed to be plastoquinone. Couples the redox reaction to proton translocation, and thus conserves the redox energy in a proton gradient. The sequence is that of NAD(P)H-quinone oxidoreductase subunit H, chloroplastic from Psilotum nudum (Whisk fern).